Consider the following 835-residue polypeptide: MSRSPDKLALPPPPPPPPSRTVVVALSGSSKSKYVVTWAIEKFATEGNVGFKLLHIHPMITSVPTPMGNAIPISEVRDDVVTAYRQEILWQSEEMLKPYTKLFVRRKVAVEVLVIESDNVAAAIAEEVTRDSIDRIVIGGSSRSFFSRKADICSVISALMPNFCTVYVVSKGKLSCVRPSDSDGNATIREDGSERTNSSSGSSGPTSDSSDVMSSAHDSQSRPLSLPVRRMQHFPAIAGQASVPMETSSVGSDETRCMSLDAEEARDVSSINRSSTDTTSRWTPRRRDYEERKEAMSSSSSNREYGNFGTRFSWSGMGVDTTHSRASQQASNMSDALSEQSYTDNQVNLNFEVEKLRAELRHVQEMYAVAQTETFDASRKLGELNQRRLEEAIKLEELKLKEYEARELAEKEKQNFEKARRDAESMRERAEREIAQRREAERKSARDTKEKEKLEGTLGSPQLQYQHFAWEEIMAATSSFSEELKIGMGAYGAVYKCNLHHTTAVVKVLQSAENQLSKQFQQELEILSKIRHPHLVLLLGACPEQGALVYEYMENGSLEDRLFQVNNSPPLPWFERFRIAWEVAAALVFLHKSKPKPIIHRDLKPANILLDHNFVSKVGDVGLSTMVQVDPLSTKFTIYKQTSPVGTLCYIDPEYQRTGRISSKSDIYSFGMILLQLLTAKPAIALTHFVESAMDSNDEFLKILDQKAGNWPIEETRELAALALCCTELRGKDRPDLKDQILPALENLKKVAEKARNSFSGVSTQPPTHFICPLLKDVMNEPCVAADGYTYDRHAIEEWLKEHNTSPMTDSPLHSKNLLPNYTLYTAIMEWRSTR.

3 disordered regions span residues 1-22 (MSRS…SRTV), 177-303 (VRPS…SSNR), and 410-457 (EKEK…LEGT). The segment covering 10 to 19 (LPPPPPPPPS) has biased composition (pro residues). Low complexity predominate over residues 195 to 218 (RTNSSSGSSGPTSDSSDVMSSAHD). The span at 269-282 (SSINRSSTDTTSRW) shows a compositional bias: polar residues. 2 stretches are compositionally biased toward basic and acidic residues: residues 285–295 (RRRDYEERKEA) and 410–455 (EKEK…EKLE). The stretch at 340-459 (QSYTDNQVNL…EKEKLEGTLG (120 aa)) forms a coiled coil. One can recognise a Protein kinase domain in the interval 480–745 (FSEELKIGMG…DLKDQILPAL (266 aa)). ATP is bound by residues 486-494 (IGMGAYGAV) and Lys-507. The active-site Proton acceptor is the Asp-602. In terms of domain architecture, U-box spans 765–835 (QPPTHFICPL…TAIMEWRSTR (71 aa)).

It belongs to the protein kinase superfamily. Ser/Thr protein kinase family.

It catalyses the reaction L-seryl-[protein] + ATP = O-phospho-L-seryl-[protein] + ADP + H(+). It carries out the reaction L-threonyl-[protein] + ATP = O-phospho-L-threonyl-[protein] + ADP + H(+). The enzyme catalyses S-ubiquitinyl-[E2 ubiquitin-conjugating enzyme]-L-cysteine + [acceptor protein]-L-lysine = [E2 ubiquitin-conjugating enzyme]-L-cysteine + N(6)-ubiquitinyl-[acceptor protein]-L-lysine.. It functions in the pathway protein modification; protein ubiquitination. Its function is as follows. Functions as an E3 ubiquitin ligase. The chain is U-box domain-containing protein 35 (PUB35) from Arabidopsis thaliana (Mouse-ear cress).